The sequence spans 977 residues: Ubiquitin-like modifier-activating enzyme 7 (977 aa).

Belongs to the ubiquitin-activating E1 family. In terms of processing, ubiquitinated by RNF170.

Its subcellular location is the cytoplasm. The protein resides in the nucleus. The protein operates within protein modification; protein ubiquitination. Its function is as follows. E1-activating enzyme that catalyzes the covalent conjugation of the ubiquitin-like protein product of ISG15 to additional interferons stimulated proteins (ISGs) as well as other cellular proteins such as P53 in a process termed protein ISGylation. Plays an essential role in antiviral immunity together with ISG15 by restricting the replication of many viruses including rabies virus, influenza virus, sindbis virus or rotavirus. The polypeptide is Ubiquitin-like modifier-activating enzyme 7 (Mus musculus (Mouse)).